The chain runs to 198 residues: Carnitine operon protein CaiE (198 aa).

Residues K174 to Q198 form a disordered region. Residues E180 to Q198 are compositionally biased toward basic and acidic residues.

This sequence belongs to the transferase hexapeptide repeat family.

The protein operates within amine and polyamine metabolism; carnitine metabolism. In terms of biological role, overproduction of CaiE stimulates the activity of CaiB and CaiD. This is Carnitine operon protein CaiE from Salmonella dublin (strain CT_02021853).